Consider the following 350-residue polypeptide: Phosphoribosylformylglycinamidine cyclo-ligase (350 aa).

This sequence belongs to the AIR synthase family.

It localises to the cytoplasm. It carries out the reaction 2-formamido-N(1)-(5-O-phospho-beta-D-ribosyl)acetamidine + ATP = 5-amino-1-(5-phospho-beta-D-ribosyl)imidazole + ADP + phosphate + H(+). The protein operates within purine metabolism; IMP biosynthesis via de novo pathway; 5-amino-1-(5-phospho-D-ribosyl)imidazole from N(2)-formyl-N(1)-(5-phospho-D-ribosyl)glycinamide: step 2/2. The chain is Phosphoribosylformylglycinamidine cyclo-ligase from Cupriavidus pinatubonensis (strain JMP 134 / LMG 1197) (Cupriavidus necator (strain JMP 134)).